The sequence spans 739 residues: Phosphoribosylformylglycinamidine synthase subunit PurL (739 aa).

Residue H54 is part of the active site. Residues Y57 and K96 each contribute to the ATP site. A Mg(2+)-binding site is contributed by E98. Residues 99–102 (SHNH) and R121 contribute to the substrate site. The active-site Proton acceptor is the H100. D122 contacts Mg(2+). Q245 provides a ligand contact to substrate. D273 serves as a coordination point for Mg(2+). Position 317 to 319 (317 to 319 (ESQ)) interacts with substrate. ATP-binding residues include D500 and G537. N538 contributes to the Mg(2+) binding site. Residue S540 coordinates substrate.

It belongs to the FGAMS family. As to quaternary structure, monomer. Part of the FGAM synthase complex composed of 1 PurL, 1 PurQ and 2 PurS subunits.

The protein localises to the cytoplasm. It carries out the reaction N(2)-formyl-N(1)-(5-phospho-beta-D-ribosyl)glycinamide + L-glutamine + ATP + H2O = 2-formamido-N(1)-(5-O-phospho-beta-D-ribosyl)acetamidine + L-glutamate + ADP + phosphate + H(+). It functions in the pathway purine metabolism; IMP biosynthesis via de novo pathway; 5-amino-1-(5-phospho-D-ribosyl)imidazole from N(2)-formyl-N(1)-(5-phospho-D-ribosyl)glycinamide: step 1/2. Its function is as follows. Part of the phosphoribosylformylglycinamidine synthase complex involved in the purines biosynthetic pathway. Catalyzes the ATP-dependent conversion of formylglycinamide ribonucleotide (FGAR) and glutamine to yield formylglycinamidine ribonucleotide (FGAM) and glutamate. The FGAM synthase complex is composed of three subunits. PurQ produces an ammonia molecule by converting glutamine to glutamate. PurL transfers the ammonia molecule to FGAR to form FGAM in an ATP-dependent manner. PurS interacts with PurQ and PurL and is thought to assist in the transfer of the ammonia molecule from PurQ to PurL. The chain is Phosphoribosylformylglycinamidine synthase subunit PurL from Bacillus cytotoxicus (strain DSM 22905 / CIP 110041 / 391-98 / NVH 391-98).